A 364-amino-acid chain; its full sequence is Probable tartrate dehydrogenase/decarboxylase TtuC (364 aa).

Residues aspartate 222, aspartate 246, and aspartate 250 each contribute to the Mn(2+) site.

The protein belongs to the isocitrate and isopropylmalate dehydrogenases family. The cofactor is Mg(2+). It depends on Mn(2+) as a cofactor. Requires K(+) as cofactor.

It localises to the cytoplasm. It carries out the reaction tartrate + NAD(+) = 2-hydroxy-3-oxosuccinate + NADH + H(+). It catalyses the reaction (2R,3S)-tartrate + NAD(+) = 2-hydroxy-3-oxosuccinate + NADH + H(+). The catalysed reaction is (2R,3R)-tartrate + NAD(+) = 2-hydroxy-3-oxosuccinate + NADH + H(+). The enzyme catalyses (2R,3R)-tartrate + H(+) = (R)-glycerate + CO2. It carries out the reaction (R)-malate + NAD(+) = pyruvate + CO2 + NADH. It functions in the pathway carbohydrate acid metabolism; tartrate degradation; 2-hydroxy-3-oxosuccinate from L-tartrate: step 1/1. Its pathway is carbohydrate acid metabolism; tartrate degradation; 2-hydroxy-3-oxosuccinate from meso-tartrate: step 1/1. It participates in carbohydrate acid metabolism; tartrate degradation; D-glycerate from L-tartrate: step 1/1. Has multiple catalytic activities. Apart from catalyzing the oxidation of (+)-tartrate to oxaloglycolate, also converts meso-tartrate to D-glycerate and catalyzes the oxidative decarboxylation of D-malate to pyruvate. The polypeptide is Probable tartrate dehydrogenase/decarboxylase TtuC (ttuC) (Agrobacterium vitis (Rhizobium vitis)).